The primary structure comprises 445 residues: Phosphoglucosamine mutase 1 (445 aa).

Catalysis depends on Ser102, which acts as the Phosphoserine intermediate. 4 residues coordinate Mg(2+): Ser102, Asp241, Asp243, and Asp245. Position 102 is a phosphoserine (Ser102).

It belongs to the phosphohexose mutase family. Requires Mg(2+) as cofactor. In terms of processing, activated by phosphorylation.

It catalyses the reaction alpha-D-glucosamine 1-phosphate = D-glucosamine 6-phosphate. Its function is as follows. Catalyzes the conversion of glucosamine-6-phosphate to glucosamine-1-phosphate. This is Phosphoglucosamine mutase 1 from Shewanella baltica (strain OS185).